Here is a 421-residue protein sequence, read N- to C-terminus: Odorant receptor 67b (421 aa).

The Cytoplasmic segment spans residues 1–48; the sequence is MQDQLDHELERIDKLPKLGLLWVEYSAYALGVNIAPRKRSSKYCRLTR. A helical transmembrane segment spans residues 49–69; that stretch reads ILVLIVNLSIIYSLVAFIMEN. At 70-71 the chain is on the extracellular side; sequence YM. Residues 72 to 92 form a helical membrane-spanning segment; it reads ISFETYVEAVLLTFQLSVGVV. The Cytoplasmic portion of the chain corresponds to 93–151; that stretch reads KMFHFQNKVESCSQLVFSTETGEVLKSLGLFQLDLPRKKELLSSVSLILLNNWMIIDRQ. The chain crosses the membrane as a helical span at residues 152 to 172; that stretch reads VMFFFKIVCMPVLYYCVRPYF. Residues 173-217 are Extracellular-facing; that stretch reads QYIFDCYIKDKDTCEMTLTYPAIVPYLQLGNYEFPSYVIRFFLLQ. A helical transmembrane segment spans residues 218–238; it reads SGPLWCFFAVFGFNSLFVVLT. Over 239-289 the chain is Cytoplasmic; that stretch reads RYESGLIKVLRFLVQNSTSDILVPKDQRVKYLQCCVRLFARISSHHNQIEN. The chain crosses the membrane as a helical span at residues 290-310; that stretch reads LFKYIILVQCSVSSILICMLL. Over 311–315 the chain is Extracellular; sequence YKIST. Residues 316-336 traverse the membrane as a helical segment; sequence VLEVGWVWMGMIMVYFVTIAL. Residues 337–384 lie on the Cytoplasmic side of the membrane; it reads EITLYNVSAQKVESQSELLFHDWYNCSWYNESREFKFMIKMMLLFSRR. A helical transmembrane segment spans residues 385 to 405; the sequence is TFVLSVGGFTSLSHKFLVQVF. Residues 406 to 421 lie on the Extracellular side of the membrane; the sequence is RLSANFFLLLRNMNNK.

It belongs to the insect chemoreceptor superfamily. Heteromeric odorant receptor channel (TC 1.A.69) family. Or63a subfamily. As to quaternary structure, interacts with Orco. Complexes exist early in the endomembrane system in olfactory sensory neurons (OSNs), coupling these complexes to the conserved ciliary trafficking pathway.

The protein localises to the cell membrane. In terms of biological role, odorant receptor which mediates acceptance or avoidance behavior, depending on its substrates. The odorant receptor repertoire encodes a large collection of odor stimuli that vary widely in identity, intensity, and duration. May form a complex with Orco to form odorant-sensing units, providing sensitive and prolonged odorant signaling and calcium permeability. Involved in the behavioral responses to ethyl acetate, pentyl acetate, methyl caproate, anisole, heptanal, 2-heptanone, r-carvone, nonanoic acid, and pyrazines. This is Odorant receptor 67b (Or67b) from Drosophila melanogaster (Fruit fly).